The chain runs to 135 residues: Small ribosomal subunit protein uS12c (135 aa).

Belongs to the universal ribosomal protein uS12 family. Part of the 30S ribosomal subunit.

It is found in the plastid. Its subcellular location is the chloroplast. With S4 and S5 plays an important role in translational accuracy. Located at the interface of the 30S and 50S subunits. This Adiantum capillus-veneris (Maidenhair fern) protein is Small ribosomal subunit protein uS12c (rps12).